The primary structure comprises 727 residues: NADH-ubiquinone oxidoreductase 75 kDa subunit, mitochondrial (727 aa).

A mitochondrion-targeting transit peptide spans Met-1–Thr-23. In terms of domain architecture, 2Fe-2S ferredoxin-type spans Asn-30–Lys-108. Positions 64, 75, and 78 each coordinate [2Fe-2S] cluster. An N6-acetyllysine modification is found at Lys-84. Cys-92 lines the [2Fe-2S] cluster pocket. The region spanning Lys-108–Gly-147 is the 4Fe-4S His(Cys)3-ligated-type domain. 8 residues coordinate [4Fe-4S] cluster: His-124, Cys-128, Cys-131, Cys-137, Cys-176, Cys-179, Cys-182, and Cys-226. Residues Thr-245–Arg-301 enclose the 4Fe-4S Mo/W bis-MGD-type domain. N6-acetyllysine occurs at positions 467, 499, and 709.

The protein belongs to the complex I 75 kDa subunit family. Core subunit of respiratory chain NADH dehydrogenase (Complex I) which is composed of 45 different subunits. This is the largest subunit of complex I and it is a component of the iron-sulfur (IP) fragment of the enzyme. Complex I associates with ubiquinol-cytochrome reductase complex (Complex III) to form supercomplexes. Interacts with MDM2 and AKAP1. It depends on [2Fe-2S] cluster as a cofactor. [4Fe-4S] cluster is required as a cofactor.

It is found in the mitochondrion inner membrane. The catalysed reaction is a ubiquinone + NADH + 5 H(+)(in) = a ubiquinol + NAD(+) + 4 H(+)(out). Core subunit of the mitochondrial membrane respiratory chain NADH dehydrogenase (Complex I) which catalyzes electron transfer from NADH through the respiratory chain, using ubiquinone as an electron acceptor. Essential for catalysing the entry and efficient transfer of electrons within complex I. Plays a key role in the assembly and stability of complex I and participates in the association of complex I with ubiquinol-cytochrome reductase complex (Complex III) to form supercomplexes. This chain is NADH-ubiquinone oxidoreductase 75 kDa subunit, mitochondrial (NDUFS1), found in Pongo abelii (Sumatran orangutan).